A 139-amino-acid chain; its full sequence is Ribosomal RNA large subunit methyltransferase H (139 aa).

S-adenosyl-L-methionine is bound by residues Leu-56, Gly-88, and 107–112; that span reads LSLMTF.

The protein belongs to the RNA methyltransferase RlmH family. Homodimer.

The protein localises to the cytoplasm. It catalyses the reaction pseudouridine(1915) in 23S rRNA + S-adenosyl-L-methionine = N(3)-methylpseudouridine(1915) in 23S rRNA + S-adenosyl-L-homocysteine + H(+). Functionally, specifically methylates the pseudouridine at position 1915 (m3Psi1915) in 23S rRNA. In Coprothermobacter proteolyticus (strain ATCC 35245 / DSM 5265 / OCM 4 / BT), this protein is Ribosomal RNA large subunit methyltransferase H.